The chain runs to 412 residues: Double C2-like domain-containing protein beta (412 aa).

The interval 1–36 is negatively regulates targeting to plasma membrane; sequence MTLRRRGEKATISIQEHMAIDVCPGPIRPIKQISDY. The mediates interaction with DYNLT1 stretch occupies residues 1 to 90; sequence MTLRRRGEKA…EDVDQLFGAY (90 aa). The tract at residues 38–123 is disordered; that stretch reads PRFPRGLPPT…PDADGYESDD (86 aa). A compositionally biased stretch (low complexity) spans 49 to 73; it reads APRASAPPDAPARSPAATAGPRSPS. Positions 95–108 are enriched in pro residues; that stretch reads GPSPGPSPVRPPAK. The segment covering 112–123 has biased composition (acidic residues); that stretch reads DEPDADGYESDD. C2 domains are found at residues 126-250 and 266-399; these read ALGT…SICL and ERGR…ERWH. Residues D157, D163, D218, D220, D297, D303, D357, D359, and D365 each coordinate Ca(2+). Residues 257–375 are mediates interaction with STXBP3; that stretch reads DKAEDKSLEE…FIGGVVLGIN (119 aa). A Phosphoserine modification is found at S411.

Interacts with STX4; the interaction is calcium-dependent, increased by insulin and glucose, and mediates vesicle fusion with plasma membrane in pancreatic cells and adipocytes. Interacts with STXBP3; the interaction is direct, occurs at the cell membrane and regulates glucose-stimulated insulin secretion. Interacts with cytoplasmic dynein light chain DYNLT1. Interacts with the SNARE (soluble N-ethylmaleimide-sensitive factor attached protein receptor) complex composed of SNAP25, STX1A and VAMP2; the interaction is calcium-dependent and competitive with SYT1. May interact with UNC13A; the interaction mediates targeting to the plasma membrane. The cofactor is Ca(2+). As to expression, expressed in brain; highly enriched in neurons.

The protein resides in the cytoplasm. It is found in the cytoplasmic granule. The protein localises to the cell membrane. Calcium sensor which positively regulates SNARE-dependent fusion of vesicles with membranes. Binds phospholipids in a calcium-dependent manner and may act at the priming stage of fusion by modifying membrane curvature to stimulate fusion. Involved in calcium-triggered exocytosis in chromaffin cells and calcium-dependent spontaneous release of neurotransmitter in absence of action potentials in neuronal cells. Involved both in glucose-stimulated insulin secretion in pancreatic cells and insulin-dependent GLUT4 transport to the plasma membrane in adipocytes. The chain is Double C2-like domain-containing protein beta (Doc2b) from Rattus norvegicus (Rat).